A 130-amino-acid chain; its full sequence is Odontogenesis associated phosphoprotein (130 aa).

The first 23 residues, 1-23, serve as a signal peptide directing secretion; the sequence is MARRHCFSYWLLVCWLVVTVAEG.

As to expression, highly expressed in placenta.

It localises to the secreted. Its function is as follows. May promote nucleation of hydroxyapatite. The chain is Odontogenesis associated phosphoprotein from Homo sapiens (Human).